A 253-amino-acid chain; its full sequence is L-cysteine S-thiosulfotransferase subunit SoxA (253 aa).

An N-terminal signal peptide occupies residues 1 to 17 (MGKWVTIIFVLFLYAIA). A Cytochrome c domain is found at 44-129 (VYAEQGRDMF…SIATYVATLS (86 aa)). The heme c site is built by Cys64, Cys67, His68, Cys102, Cys165, Cys168, and His169. Arg210 lines the substrate pocket. Cys214 provides a ligand contact to heme c. Catalysis depends on Cys214, which acts as the Cysteine persulfide intermediate.

The protein belongs to the SoxA family. As to quaternary structure, heterodimer of SoxA and SoxX. Requires heme c as cofactor. Post-translationally, cysteine persulfide at Cys-214.

Its subcellular location is the periplasm. The enzyme catalyses L-cysteinyl-[SoxY protein] + thiosulfate + 2 Fe(III)-[cytochrome c] = S-sulfosulfanyl-L-cysteinyl-[SoxY protein] + 2 Fe(II)-[cytochrome c] + 2 H(+). The catalysed reaction is S-sulfanyl-L-cysteinyl-[SoxY protein] + thiosulfate + 2 Fe(III)-[cytochrome c] = S-(2-sulfodisulfanyl)-L-cysteinyl-[SoxY protein] + 2 Fe(II)-[cytochrome c] + 2 H(+). In terms of biological role, C-type diheme cytochrome, which is part of the SoxAX cytochrome complex involved in sulfur oxidation. The SoxAX complex catalyzes the formation of a heterodisulfide bond between the conserved cysteine residue on a sulfur carrier SoxYZ complex subunit SoxY and thiosulfate or other inorganic sulfur substrates. This leads to the liberation of two electrons, which may be transferred from the SoxAX complex to another cytochrome c that then channels them into the respiratory electron transport chain. Some electrons may be used for reductive CO(2) fixation. The protein is L-cysteine S-thiosulfotransferase subunit SoxA of Hydrogenobacter thermophilus (strain DSM 6534 / IAM 12695 / TK-6).